The chain runs to 367 residues: tRNA-specific 2-thiouridylase MnmA (367 aa).

ATP contacts are provided by residues 10-17 (AMSGGVDS) and methionine 36. Cysteine 106 acts as the Nucleophile in catalysis. A disulfide bond links cysteine 106 and cysteine 204. Residue glycine 130 participates in ATP binding. Residues 154–156 (KDQ) are interaction with tRNA. Cysteine 204 acts as the Cysteine persulfide intermediate in catalysis. The segment at 310–311 (RY) is interaction with tRNA.

The protein belongs to the MnmA/TRMU family.

The protein localises to the cytoplasm. It carries out the reaction S-sulfanyl-L-cysteinyl-[protein] + uridine(34) in tRNA + AH2 + ATP = 2-thiouridine(34) in tRNA + L-cysteinyl-[protein] + A + AMP + diphosphate + H(+). In terms of biological role, catalyzes the 2-thiolation of uridine at the wobble position (U34) of tRNA, leading to the formation of s(2)U34. This chain is tRNA-specific 2-thiouridylase MnmA, found in Desulforamulus reducens (strain ATCC BAA-1160 / DSM 100696 / MI-1) (Desulfotomaculum reducens).